The primary structure comprises 651 residues: Beta-glucuronidase (651 aa).

Residues 1 to 22 form the signal peptide; the sequence is MSRGPAGAWVALGPLLWTCGLA. N-linked (GlcNAc...) asparagine glycosylation is found at Asn-172 and Asn-419. Residue Glu-450 is the Proton donor of the active site. Residue Asn-630 is glycosylated (N-linked (GlcNAc...) asparagine).

Belongs to the glycosyl hydrolase 2 family. As to quaternary structure, homotetramer.

It localises to the lysosome. It carries out the reaction a beta-D-glucuronoside + H2O = D-glucuronate + an alcohol. Its activity is regulated as follows. Inhibited by L-aspartic acid. Functionally, plays an important role in the degradation of dermatan and keratan sulfates. The sequence is that of Beta-glucuronidase (GUSB) from Canis lupus familiaris (Dog).